The sequence spans 84 residues: Putative antitoxin RelB4 (84 aa).

Functionally, antitoxin component of a type II toxin-antitoxin (TA) system. Its cognate toxin is RelE4 (Potential). The chain is Putative antitoxin RelB4 (relB4) from Methanocaldococcus jannaschii (strain ATCC 43067 / DSM 2661 / JAL-1 / JCM 10045 / NBRC 100440) (Methanococcus jannaschii).